Reading from the N-terminus, the 105-residue chain is Large ribosomal subunit protein uL18c (105 aa).

The protein belongs to the universal ribosomal protein uL18 family. Part of the 50S ribosomal subunit; contacts the 5S rRNA.

It localises to the plastid. The protein localises to the chloroplast. Its function is as follows. Binds 5S rRNA, forms part of the central protuberance of the 50S subunit. The protein is Large ribosomal subunit protein uL18c (rpl18) of Cyanidium caldarium (Red alga).